The chain runs to 424 residues: UDP-glycosyltransferase 76H1 (424 aa).

UDP-alpha-D-glucose is bound by residues Ser248, 306-307 (WA), 324-332 (HCGWNSTIE), and 346-349 (FADQ).

It belongs to the UDP-glycosyltransferase family.

May glycosylate diterpenes or flavonols in leaves. The chain is UDP-glycosyltransferase 76H1 from Stevia rebaudiana (Stevia).